We begin with the raw amino-acid sequence, 564 residues long: Efflux pump hmp6 (564 aa).

The segment covering 1-25 has biased composition (basic and acidic residues); sequence MEKHAEPEKSLGDKEFQEKELHEKP. Residues 1–46 form a disordered region; it reads MEKHAEPEKSLGDKEFQEKELHEKPAPAASEDISGDSSVNKEDGPD. Transmembrane regions (helical) follow at residues 58–78, 96–118, 125–145, 156–176, 186–206, 214–234, 259–279, and 289–309; these read LAVV…DTTI, VGWY…GKLY, IVFT…GVAP, IAGL…IHSV, GMIV…GGAF, WCFY…LFFF, FGTF…QMGG, and IIVL…VQFF. Residues N312 and N322 are each glycosylated (N-linked (GlcNAc...) asparagine). The next 4 helical transmembrane spans lie at 330 to 350, 361 to 383, 395 to 415, and 452 to 472; these read IYMF…PIWF, SGIR…GALV, ASVV…VDAS, and IGTA…VSAA.

It belongs to the major facilitator superfamily. TCR/Tet family.

The protein localises to the cell membrane. In terms of biological role, efflux pump that might be required for efficient secretion of hypothemycin or other secondary metabolies produced by the hypothemycin gene cluster. The protein is Efflux pump hmp6 of Hypomyces subiculosus (Nectria subiculosa).